Consider the following 781-residue polypeptide: Penicillin-binding protein 1B (781 aa).

Residues 151–322 (FRLAPKLIAM…SLYNPWRNPQ (172 aa)) form a transglycosylase region. Residue Glu-188 is the Proton donor; for transglycosylase activity of the active site. Residues 415–702 (SQLQLKMKNP…ALQIYKDYLN (288 aa)) are transpeptidase. Residue Ser-466 is the Acyl-ester intermediate; for transpeptidase activity of the active site. Residues 749–768 (ETSSPSLTPTTETETPPQES) are compositionally biased toward low complexity. Positions 749-781 (ETSSPSLTPTTETETPPQESLWDVLDNPNPPAQ) are disordered.

It in the N-terminal section; belongs to the glycosyltransferase 51 family. The protein in the C-terminal section; belongs to the transpeptidase family.

The protein resides in the cell inner membrane. The catalysed reaction is [GlcNAc-(1-&gt;4)-Mur2Ac(oyl-L-Ala-gamma-D-Glu-L-Lys-D-Ala-D-Ala)](n)-di-trans,octa-cis-undecaprenyl diphosphate + beta-D-GlcNAc-(1-&gt;4)-Mur2Ac(oyl-L-Ala-gamma-D-Glu-L-Lys-D-Ala-D-Ala)-di-trans,octa-cis-undecaprenyl diphosphate = [GlcNAc-(1-&gt;4)-Mur2Ac(oyl-L-Ala-gamma-D-Glu-L-Lys-D-Ala-D-Ala)](n+1)-di-trans,octa-cis-undecaprenyl diphosphate + di-trans,octa-cis-undecaprenyl diphosphate + H(+). It catalyses the reaction Preferential cleavage: (Ac)2-L-Lys-D-Ala-|-D-Ala. Also transpeptidation of peptidyl-alanyl moieties that are N-acyl substituents of D-alanine.. The protein operates within cell wall biogenesis; peptidoglycan biosynthesis. Cell wall formation. Synthesis of cross-linked peptidoglycan from the lipid intermediates. The enzyme has a penicillin-insensitive transglycosylase N-terminal domain (formation of linear glycan strands) and a penicillin-sensitive transpeptidase C-terminal domain (cross-linking of the peptide subunits). The protein is Penicillin-binding protein 1B (mrcB) of Haemophilus influenzae (strain ATCC 51907 / DSM 11121 / KW20 / Rd).